Consider the following 257-residue polypeptide: MGRLQRTLSNISEEEIDNGRIGIVAGAIEYPNQPALVGRAALRTGSDHVRALVADPIYEIVAGQDPNLLVDRYAGEQFEESAVERTREMSEWADALVIGPGLVDADPQAVCEAIDTIDVPMVVDALALEPSLDADLSNAVLTPSGAEVGPIRDEYGSLEAFSEETGAVITLTGDVDEIVADGERLENETGTSAMTVAGTGDTMVGIVASLLGQGMDRREAAELGAWILGKTGELATANHGPGVVATDVIERIPDTIR.

Residues 1-257 enclose the YjeF C-terminal domain; sequence MGRLQRTLSN…VIERIPDTIR (257 aa). Gly-200 provides a ligand contact to AMP. Asp-201 contributes to the (6S)-NADPHX binding site.

The protein belongs to the NnrD/CARKD family. In terms of assembly, homotetramer. It depends on Mg(2+) as a cofactor.

It catalyses the reaction (6S)-NADHX + ADP = AMP + phosphate + NADH + H(+). The catalysed reaction is (6S)-NADPHX + ADP = AMP + phosphate + NADPH + H(+). Functionally, catalyzes the dehydration of the S-form of NAD(P)HX at the expense of ADP, which is converted to AMP. Together with NAD(P)HX epimerase, which catalyzes the epimerization of the S- and R-forms, the enzyme allows the repair of both epimers of NAD(P)HX, a damaged form of NAD(P)H that is a result of enzymatic or heat-dependent hydration. The protein is ADP-dependent (S)-NAD(P)H-hydrate dehydratase of Haloterrigena turkmenica (strain ATCC 51198 / DSM 5511 / JCM 9101 / NCIMB 13204 / VKM B-1734 / 4k) (Halococcus turkmenicus).